The primary structure comprises 2894 residues: MKSYLKNISIFVFTILLLSNVSLGLNVSTTNNNSNFELNNSLIYKLNNSLTNTTNNSGSIIINNTTDTNKEKNECYLNITINGYRVIVKTNGEVFGFANKTPLKFIKIGDNEYIISPIVLNVPIEIYSKFNDKILHRTVILNYTKPEKEKKETNIKKEELHYLNVSFNNFKLIVKTNGKPYAKYLDLNIKVKTKKIKKHEYLVYPLILNKTIIIYAKFKNETLNRTIFLNYSIEENTTTNKTVILKNVYFPSEKIVIKTNFKPHTAYIVTPNNKIIHLKVHKKGKFYILSTKLKKNVILGNYSVVVDGIKKTFAVDYYKINAKLIDNRFIVGNVSYYVKEPKFITCIVDKKEINISLINGAFEIPLDYLIPKLNISKPEKIKKIILICGNAKEKIKVKFKNKEEIKKLISYDPVNKEIIIKLEGSEKEIKKLLKRYEKRKKYKISKIVKIYNYSIVEIKLKADKEILKDYNLPENILNTTEIVKKISSNKIRVEVNNKVDGVWYRFSCKIPKGYRVKEIVGDDGRVIRNNISINRLTGEVIGEVRWYIENNTLYFYDDPIYGYDISLIPPAPNHSIAVELSYNGQDYGGCGQISAIVFPYNKEDDETTVATYDHAGRTGDYNYANNIDAYAGSKIAIKYTSGALTRQYGVLGTAGSLGWWTYYYLSEINRTDIPLNTVPNGILESVIITDMYAPWNNNELNITQKVIIRGNNKWFATIYYIKNPTTKTYTNLKFFQGMDWNFRGSWWGDDAYYNSIDDVVYGYDSNAPVGDIQYGGFKSNIPSYEHDVNLYWSTWSDIRYDNLNNDSSYEGDAGTALAWTKDSLKPGEIWVVPIIWGLGYNYTDMMNEINMGLSQLYDTGVKSIDYPNNGDSFNPNIGPIIYINSTIALYGLVDAYNLNVSINITQINGTYIYTNSTLINLSVPYEEEKLVSFPVNISNMPYGAYNITIKTNLPNDQNTSNDEKSIIIYITSFSVQPNYQEKTGNVGEEIFYNITLYNFGVGGRFDINITYLTKGWTTKIYNNSILIAEDANGDGIWDYINPNYDLNSNNLPDIYVPTGEINLTVSKTIPSTAPLGEIDTTTLKFVNINNPSIFGKTTFQTSTPYPPSVQKTFYLHGDTLRTLNTSIPTTINNYTTINSNSLASWIQYPRFADNFTVVGKIPILLYINDPNVIFGTEMHKIVVSLMATNGIDSFTLGSDVEYLYLDDTIKSYIFNITLDSIITIPKNYYLVLRVENQISSNSINIYHNSTYPSNITLNTTTYVNVYNIFSDKNVYLPNENVTIFANITDPIGSYDISGANITVYYPNGSVYINSSMLLQEIDKNSPSLWKLYNYSFSLPESGKYLITITGIESNGVISKKNYTIYCGYEIQGYVKEDFGTLGKEDSEDKGIYGVNVSLLEDSNNDGIPDIGDTIVNSTTTDIFGHYSFLVYNSSKTYFVVVNSRTVGTTRGLNPQYSKNDIWAEETYQTVYTPINSSQWIANGNASIFPDKLLLTTDDYGEAGSVWYYKPVNLSEDLVVEFYAYLGDNPDGADGITFTLQSLGTNELGGTGGDLGYGGISPSVAVEVDTWLNDFDAPATTDHIAIDVNGNINHTYNSLTYPTPNPYDLGNVEDGREHLIKIVWNATTKTLQVYFDGNLSLTWNKDITQIIGNSAYFGFTGGTGGAKNLQYVKPIYVKNGDGYIINPTYGVVEMFGGRDPNEEDNWEDGKYEHYCLINLNSYSGKNITFGFSFDVITNTKSTGQGSFSQFIKNANAIYGKDESYFRIPNIDAKNGNHYIYTSGNKILDNLTIVNGSTQINGTIILSGLQWIANGNAYINNSNNLTLILTPDDYNQKGSVWYYKPVNLSEDLVVEFYAYLGDNPDGADGITFTLQSLGTNELGGTGGDLGYGGISPSVAVEVDTWLNDFDSPATTDHIAIDVDGNLNHTYNSLTYSTPNPYDLGNVEDGREHLIKIVWNATTKTLQVYFDGNLALTWNKDITQIIGNSTYFGFTGGTGGAKNLQYVKPTYVKNGDNVLNLEEISPNPIIDNVGADTYIGNIFFENVSVGILGNETGLNNLTLKSCGIYGKILNAGVKLVDYDWSLQNYPLYIDNLTINASGGYGISMLNKIWAMLYNSQISLKNGVGIYWANWAGGFGNITIYNITISSCNQGLVLYKDGNGIKLINSQIKNSVYEGVYSKNSTLEILNSSIINNSIGIYANISSILVNNSLIYKNRYEGLLLENSSSSILNSNIMNNSIGIYLKENYISKIQKSNISYNAYGIEIVNSSNVYINSSNIFNASTDGIAIFNGENVSVENSLLYNNNYSILSYGNLSNLSVLNSLLRDSINNSIDIEVPSDGFLNNLKLYNSSVLNSGSYGLFIYSLGSASNVNISKSLINGSYKDGIYIYGVNAINIVNNNITNNGLIGGDPAGSGIKISGNYTKGVLILNNNISHNLGNGISLEGLWSRTLCDVKVENNIISNNGIEENSGNGIYIGGRVENVSIFNNTIQYSDAQAILIQEANGWNSWDWIGTNISIINNTIQYNGLTVTIGNITAGITVGAYGVYNQDNGYIIIEGNKIINNNLCPNPTYGGKVGGIEVYGLNESWISLEFNISKNIIANNSAYGILIGASKDINIINNTIFNNEKGITIPNWDFVPYNIIISKNSIYNNSLLGIDLDDDNVTLNDGLLNYNEANHGIDYPIITYAELNGDNLTVKGYIGNGTGSSNFANAVVEIYLVKNLSGGDNLIGNNISSDGTVLNDTYGESWIYLGSLIADSNGFFSGTINVSGKGVGDESLLTATATIKGIGTSEFGRNYLLIKKFFNITGTIVMLPNGYNITIKSYNTTRDVYVYWYKPDNIEVINISGDYDENGTYGNTYWFKFNVINANETMNISITTNITTVEGLIIGIDPKK.

Residues 8–28 traverse the membrane as a helical segment; it reads ISIFVFTILLLSNVSLGLNVS. PbH1 repeat units lie at residues 543-567, 2085-2107, 2135-2156, 2158-2180, 2201-2223, 2224-2244, 2245-2266, 2267-2289, 2290-2311, 2341-2363, 2367-2389, 2390-2419, 2422-2444, 2455-2477, 2479-2501, 2512-2542, 2550-2582, 2589-2611, 2612-2633, and 2638-2660; these read EVRW…DISL, NYPL…SMLN, FGNI…VLYK, GNGI…YSKN, ISSI…LLEN, SSSS…YLKE, NYIS…EIVN, SSNV…AIFN, GENV…LSYG, LNNL…FIYS, ASNV…YIYG, VNAI…KISG, TKGV…SLEG, VENN…YIGG, VENV…LIQE, GTNI…TVGA, NGYI…EVYG, SLEF…LIGA, SKDI…TIPN, and PYNI…DLDD.

It is found in the membrane. This is an uncharacterized protein from Methanocaldococcus jannaschii (strain ATCC 43067 / DSM 2661 / JAL-1 / JCM 10045 / NBRC 100440) (Methanococcus jannaschii).